The primary structure comprises 257 residues: Deoxyribose-phosphate aldolase (257 aa).

Asp-102 (proton donor/acceptor) is an active-site residue. The active-site Schiff-base intermediate with acetaldehyde is Lys-166. Lys-198 acts as the Proton donor/acceptor in catalysis.

Belongs to the DeoC/FbaB aldolase family. DeoC type 2 subfamily.

It is found in the cytoplasm. It catalyses the reaction 2-deoxy-D-ribose 5-phosphate = D-glyceraldehyde 3-phosphate + acetaldehyde. The protein operates within carbohydrate degradation; 2-deoxy-D-ribose 1-phosphate degradation; D-glyceraldehyde 3-phosphate and acetaldehyde from 2-deoxy-alpha-D-ribose 1-phosphate: step 2/2. Functionally, catalyzes a reversible aldol reaction between acetaldehyde and D-glyceraldehyde 3-phosphate to generate 2-deoxy-D-ribose 5-phosphate. The sequence is that of Deoxyribose-phosphate aldolase from Shewanella sediminis (strain HAW-EB3).